The primary structure comprises 273 residues: Shikimate dehydrogenase (NADP(+)) (273 aa).

Residues S14–S16 and T61 each bind shikimate. The Proton acceptor role is filled by K65. E77 provides a ligand contact to NADP(+). Shikimate contacts are provided by N86 and D102. NADP(+)-binding positions include G126–A130, N150–K155, and M213. Y215 contributes to the shikimate binding site. G237 is a binding site for NADP(+).

It belongs to the shikimate dehydrogenase family. In terms of assembly, homodimer.

The catalysed reaction is shikimate + NADP(+) = 3-dehydroshikimate + NADPH + H(+). It participates in metabolic intermediate biosynthesis; chorismate biosynthesis; chorismate from D-erythrose 4-phosphate and phosphoenolpyruvate: step 4/7. Functionally, involved in the biosynthesis of the chorismate, which leads to the biosynthesis of aromatic amino acids. Catalyzes the reversible NADPH linked reduction of 3-dehydroshikimate (DHSA) to yield shikimate (SA). The protein is Shikimate dehydrogenase (NADP(+)) of Aliivibrio fischeri (strain MJ11) (Vibrio fischeri).